Consider the following 820-residue polypeptide: Potassium channel GORK (820 aa).

The Cytoplasmic segment spans residues 1–69 (MGRLRRRQEI…PKNRWYKAWE (69 aa)). The helical transmembrane segment at 70 to 90 (MFILVWAIYSSLFTPMEFGFF) threads the bilayer. Residues 91–97 (RGLPERL) are Extracellular-facing. A helical membrane pass occupies residues 98–118 (FVLDIVGQIAFLVDIVLQFFV). Residues 119–141 (AYRDTQTYRTVYKPTRIAFRYLK) are Cytoplasmic-facing. The chain crosses the membrane as a helical span at residues 142–162 (SHFLMDFIGCFPWDLIYKASG). The Extracellular segment spans residues 163–168 (KHELVR). A helical; Voltage-sensor membrane pass occupies residues 169-189 (YLLWIRLFRVRKVVEFFQRLE). Residues 190–203 (KDTRINYLFTRILK) lie on the Cytoplasmic side of the membrane. The helical transmembrane segment at 204–224 (LLFVEVYCTHTAACIFYYLAT) threads the bilayer. Topologically, residues 225–259 (TLPPENEGYTWIGSLKLGDYSYENFREIDLWKRYT) are extracellular. The segment at residues 260 to 279 (TALYFAIVTMATVGYGDIHA) is an intramembrane region (pore-forming). Topologically, residues 280-285 (VNLREM) are extracellular. The helical transmembrane segment at 286-306 (IFVMIYVSFDMVLGAYLIGNI) threads the bilayer. At 307–820 (TALIVKGSNT…YMISDTTDQT (514 aa)) the chain is on the cytoplasmic side. An a nucleoside 3',5'-cyclic phosphate-binding site is contributed by 386-508 (LFKGCSTEFI…ILNNIMEEKE (123 aa)). ANK repeat units lie at residues 528–559 (EAEL…DPNK), 563–592 (DGRS…DVNL), 596–625 (FGHT…SFNL), 627–656 (DSGN…NPNS), 660–689 (DHRT…SVIS), and 693–722 (WGNS…AQSS). Positions 740-820 (KCTVFPFHPQ…YMISDTTDQT (81 aa)) constitute a KHA domain.

It belongs to the potassium channel family. Plant (TC 1.A.1.4) subfamily. As to quaternary structure, the potassium channel is probably composed of a homo- or heterotetrameric complex of pore-forming subunits. In terms of tissue distribution, expressed in guard cell-containing tissues, in root epidermal cells and in root hairs. Detected in vascular cells of the root and shoot.

It is found in the membrane. In terms of biological role, major selective outward-rectifying potassium channel of the guard cell membrane. Involved in regulation of stomatal movements according to the water status. Assuming opened or closed conformations in response to the voltage difference across the membrane, the channel is activated by depolarization. Conductance of the channel is modulated in a potassium-dependent fashion. May interact with the cytoskeleton or with regulatory proteins. This chain is Potassium channel GORK (GORK), found in Arabidopsis thaliana (Mouse-ear cress).